A 465-amino-acid chain; its full sequence is Asparagine--tRNA ligase (465 aa).

This sequence belongs to the class-II aminoacyl-tRNA synthetase family. As to quaternary structure, homodimer.

It localises to the cytoplasm. The enzyme catalyses tRNA(Asn) + L-asparagine + ATP = L-asparaginyl-tRNA(Asn) + AMP + diphosphate + H(+). This Clostridium perfringens (strain SM101 / Type A) protein is Asparagine--tRNA ligase.